The chain runs to 213 residues: Thiopurine S-methyltransferase (213 aa).

Residues tryptophan 10, leucine 46, glutamate 67, and arginine 124 each coordinate S-adenosyl-L-methionine.

This sequence belongs to the class I-like SAM-binding methyltransferase superfamily. TPMT family.

It is found in the cytoplasm. The catalysed reaction is S-adenosyl-L-methionine + a thiopurine = S-adenosyl-L-homocysteine + a thiopurine S-methylether.. This Xanthobacter autotrophicus (strain ATCC BAA-1158 / Py2) protein is Thiopurine S-methyltransferase.